A 7756-amino-acid chain; its full sequence is MNSMGDLTDLYTLTPLQEGMLFHSLYSEGSAYMIQTTAILTGELDIVPFEKAWKKVIQRHSILRTGFIWEETEKPLQAVFESVPFSIRQKDWSSYGSDEQESMLAAFLQNEKAAGFDLSEAPLMRVTIIKLGEAVHRLIWSFHHLLLDGWSSPIVFQEVLDFYEAYRQGKDLRLPQARPFKDYVSWLRRQDKTASEQFWREFLGPMENPTPIPFETHAKRTAGHEGLEKQIGEATRALTGQVTKALAKLARTNKVTVNTIVQGAWAILLSRLSGEENVVYGVTGSGRPSDLPGVEQMVGMFINTLPMKAKIEPEQSLADWFKALQEQQSKVRQYEYTSLVDIQGWTDVPRGTPLFESIFVFENYPLGEEDEKEVGFTISAVQHFQEVDNPLTVVGIPGDPFSIKMMYATDRFEQAAIERTLDQLALILEAIVDNPERSLSALSLLRPEERQHLLVGLNDTATNYPSDKTVHQLFAETAARHPERIAAVAGDQQLTYAELEARANQLANYLQKQGVEAGTLVGLCVDRSLDMLIGLLAILKAGGAYVPIDPAYPEERLAFMLADAKISILLTQKHLGKQWKGRKRRTVYLDRDAKKWAEESPLAPDVDTTKDSLAYVIYTSGSTGTPKGVLAVHRGVVRLGQKTRTTSPISEADVFLQASTVSFDAATFEIWGALLNGAKLVLMPPDLPSLDELGEAIVQHKVTTLWLTAGLFSIMVDHNADYLRGVRQLLVGGDVVSVPHVRKVLALGGVTVINGYGPTENTTFTCCYPVTELSEDITSFPIGRPISNTTVYVLDKHKQPVPYGAAGELYIGGDGLALGYLNNAELTAERFVENPFDPQKGSRLYRTGDLVRYLPNGTIEFIGRIDNQVKIRGFRIELGEVEAALALHPEVSETVVMARENDRGEKHLTAYVTVAKDDAPEVADLQAWLKTKLPEYMVPSAYVFLDAMPLTANGKIDRRRLPEPEWGNRSETKAYTEPRNQAEELIASIWSQVLGVEKVGIHDNFFELGGHSLLATRVISRLREVFGVEQSVRSIFEHPTIDAWSEQTAALQLGGPGTDDSSTQIQPVPRDGALPLSFAQQRLWFFDQLMPDNPMYNIPFALRLQGELDVAAWEKSLQAIIARHESLRTTFTDIDGQAVQVIHPQLDWKLDTVDLRDRSSEEKQQASARLAADDAARPFDLRQGPLMRATMIRTEEQAHVFLINMHHIVSDGWSVGVFLRELFAHYEAYSKGEVPQLAPMPIQYADFAAWQREWLEGEVLEQQVAYWKEKLGGAEPLLALPTDRPRPALQSYEGATYTTSFSHDLLAKLKKLSKEAQHDLVHDIARRFPNVLYRYSGQEDIVVGSPVAGRNRQETEKLIGFFVNTLALRTSLSGDLPFTELLARVRETALAAYAHQDVPFEKLVDELQLERSLSYSQLFQVMFVLQNFPLEDVETAGLHVAPVDTESHLTTSKFDLTLTMREKEDTLVAAFEYSTDLFDRTTIERMAEHLQHLLASIVTQPEASLDQLALLGESEWNRLVVEQNETATDYPRDKTAHQLFAETAARYPERIAAVAGDQQLTYAELDTKANQLANYLQKQGVEAGTLVGLCVDRSLDMLVGLLAILKAGGAYVPLDPAYPEERLAFMLADANVSILLTQKHLGKQWKGRKRRTVYLDRDAKKWTAESPLAPAVDATKDSLAYVIYTSGSTGTPKGVLVAHRGIVRLVKNTNYVTITEEDVFLQASTVSFDAATFEIWGALLNGAKLVLMPPDLPSLDELGEAIVQHKVTTLWLTAGLFSIMVDHNADYLRGVRQLLVGGDVVSVPHVRKVLALDGVTVINGYGPTENTTFTCCYPVTELAEEITSFPIGRPISNTTVYVLDKNRQPVPLGVAGELYIGGDGLASGYLNNPELTAERFVDNPFDPQKASRLYRTGDLVRYLPDGAIEFIGRIDNQVKIRGFRIELGEIETALLRHPAVQEAFLMVREDAPGDKRLAAYLVFAGGQTVEPVEMRSYLKDKLPEYMIPSAFVQMDSFPLTPNGKVDRRALPTPEYARSEAASGYVAPATELEVKLADIWKTVLGVADVGIHDNFFELGGDSILSIQIVARANQLGIRLTPKQLFENQTIAELLRVVADSSQLPHTKWENEQGIVTGNVPLTPIQKWFFAADQPSLHHWNQSLLLTVQQPVDVSVLERAIASLLSHHDALRMSFSFVDGAWTQQMNGLGDHTPFRCVDLSDLSTQEQEQAARLEEIASEVQASLNIAEGNVVQAVYFNLGEQKAGRLLLVVHHLVVDGVSWRILLEDLQHAYEQLANHADVSFPAKTTSFKMWAEKLADYADSDALEQEKAYWLQQSSGGSPLPVDHPYEPNENTEAAAKQVTLSLRADETRALLHETLTAYRLQINDVLLAALAKAMQRWTGQKTLHVHLEGHGREEIIEGADLSRTVGWFTSMYPVQLDFDQSKPWGHVLKAVKEQLRHIPQKGIGYGILQYLSNDDEWKEQLQAYTKPEISFNYLGQFDQVVSAGAKFAMAEESRGANIAADAIRAHLIDVNSAISGEQLHITWMYNANIHNQETIEALARDYMESLREIMEHCRSEEAGGYTPSDFPLARLDQRAIDNYVGRDRSIENVYPLTPLQEGMLFHSLYEHAGGDYVVQFSMTMHHVEVDVFQQAWQKVVDRHSILRTSFIWDGVSTPHQIVRKHVQVVVDEQDWRHVPADQQKAEWDAFLEEDRKRSFAITEPPLMRWTLLRISDTAYRFIWSFHHVLLDGWSVPLVMKDWFAAYMALADGKDIQFGAVHPFSQYVAWIQRQDLQAAERFWRNHLKGIYAPTQVNFGQTVQPVGETKSYDERSIRFSAERTRELQAFARQHQVTLNTLVQSAWAMILGTYSKEADVVFGATGSGRPADLPGVENMVGLFINTLPIRVTLDPGKKVREWLRELQELQVELRQYEYTPLVDIHGWSEMARNAPLFESIFIFENYPIDESVKEVDHSFQIADVDSVEQTNYPLTVVCGPGAEFLVKIKFDQSRFDGGRIERVLEQMTLLLQSMTANPDQLLADVNMISQSEQKQVLIEWNETKVDYPTGLCVQQAFEQQVEKTPDAVALIYKDVELTYADLNQRANQLAHRLLAQEVKPDTLVGICVERSPEMIIGIFGVMKAGAAYVPIDPALPQERIAYMVEDSQASILLTQQSLAELLPKTQARVICLDGDSLANEPVANPASEVTEQNLAYVMYTSGSTGLPKGVMVEHHSVVNLAHALIEAFRIQPSSRVLQFTSFSFDVSVSEIVMALLAGAALVIEDREVLLPGPELISVLQQKRITTVSMVSSVLAALPAADLPDLQTLIVGGEAPSRELVARYADRRQFFNCYGPTEATVCSTMMLCNAGMKSAPIGRPLANATLYVLDANQKPVPVGVPGELYIGGKGLARGYWNRPELTAERFIAHPFGAKGERLYRTGDLVRYLPDGNLEFLGRIDTQVKIRGYRIELGEIESALSQHPAIQEAVVIAWEQRLAAYMVAAGEAQPAAEELARYLKETLPDYMIPAGFVFMDAIPLTVNGKVDRRALPAPDWGILATRQEYVAPRTPTEEMVANIWAQLLSVEKIGVHDDFFERGGHSLLATQAISRLRQAFGVELPLRMLFDHPTTAAISTQIASLLQGETALRSQPIVPVPRDQHVPLSFAQQRLWFLDRLIPNSFLYNIPSAARLHGELDVEAWERSLKLLIQRHESLRTTFSDRDGEAVQIIHPAIEWSLGRVDLREWAEAEREAKALQLAIEDAKRPFDLERGPLLRASLLVMAQQEYVFLLNLHHIVADGWSMNVFMEELVTIYEALSAGETPQLAELPLQYADYAAWQRDWLQGDVLEQQLAYWKAKVGGAEPLLALPTDRPRPAVQSHKGAMHTITLPAERLAALKTLSREEGSTLFMTLLAAFQTLLYRYSGQSDIVVGSPVAGRNRQETESLIGFFINTLAMRTDLSGEPTFRDLLGKVRETALEAYAHQDLPFEKLVDELELERSLSYSPLFQVMFVLQNIPMDAQALSHIRLEPFHIGQEGVSAKFDITLTTVELPAGLMATFEYNTDLFDPATIERMAGHYANLLAAVSVNPLQPITAIPLVSDQERKQVLFQWNDTSVPSERDTCVHEQVARIAQQLPNQLAVVSDEGQITYAELDAKANQVANYLHKQGIISETLVGVCLDRSIDMLVAQLGILKAGGAYVPMDPAYPQERLAFMMQDAEMPVVLTQEHLLAQLPEARATFLCLDRDWSLIAEESDVAPVIATNRDNLAYVIYTSGSTGTPKGVEIEHAALLNLVSWHQRAYEVGAEDRATQIAGTAFDASVWEIWPYLTKGATLYLPSEEIRLVPEQLRDWLVASGITISFLPTPLAERLLTLEWPSDAKLRYMLTGGDKLHDYPPATLPFVLANQYGPTENAVVATAGIVPAAAGQVSAPSIGRPIDNVQVYVLDEKLQPVPIGVAGELYIAGDSLARGYLHRPDLTRERFIANPYGQKAGARMYKTGDLVRYLPDGNIEFIGRADDQVSIRGFRVELGEIETALYSHPAVKETIVLVREDMPGMKRLVAYIVQREGQEGQAVQAGDFRSYLKELLPEYMVPAAFVFMADLPLTPNGKVDRRALPAPDLFNSEADGTYVAPATELEIKLAHIWKNVLGLADVGIHDNFFELGGDSILSIQIVSRANQAGIRLTPKQLLANQTIAELASVATVTDESEATKLPNEQGIVTGDVPLTPIQTWFFASEQPSVHHWNQSLLLTVQQPVDLAVLERTIECLLAHHDALRMRYSRTEQGWTQRIEGLPETIPFRSVDLSAFPTTAEQEMRLEEIASEVQASLDLTEGPVVQAVYFQLGAEQPGRLLIVAHHLVVDGVSWRILLEDLQTAYEQLAKGQAVQLAAKTTSFKTWAEQLRLYATSEALRQEKAFWLEQMDEVKPLPIDRIFEPSENTEATVKQVMLSLNAEETRALLQDTLSPYRLQINDVLLAALTKALHRWTGEQTVAIHLEGHGREELIEGADLSRTVGWFTSLYPVQLSVDPTKPWGDTLKAVKEQLRSIPNKGVGYGILRYLSEDAELQKRLAEKAQAEISFNYLGQFDQAVVPESKFGMAQEARGANVGQQAIRQHLLDVNSVIAGEQLHVTWMYSENIHEEATIQQLAHNYLEALREIIAHGQSEAAGGYTPSDFPLARMDQRALDKYLGQNRSIENVYPLSPLQGGMLFHSLYEQEGGDYVVQLAMTVEGLDVEAFEQAWQKVVDRHSILRTSFIWEGLTEPHQVVRKQVKACVEKIDLRHLTPDQQKAELSEYLAADRRRSFEIAVAPLMRWTLFRLSESAYRFTWSFHHVLLDGWSIPIVLKDWFSAYLSLAEGKEVAHSFVQPFAHYVEWVQRQDLQAAEQFWREQLAGFYEPTPLAMGNSTGGRADLPKGYEEQEIRLAKDATARLQAFVRTHQLTLNTLVQGAWALMLGRYGGTDDVVFGATGSGRPADLPGVESMVGLFINTLPIRVALDANQSVREWLRGMQEQQVELRQYEYTPLVDIQGWSEMTRNTALFESIFIFENYPIGESVKDEQHQLRLSDVETIEQTNYPLTVVCGPGEELIVKIKYEQNRFAPEQIERVLQQMSQLLQDMTAKPEQRLQDVSMISERERQQVLVDWNETSVAYPQQLCVHQAFEQQVEKTPDAVALVYKDVELTYAELNERANQLAHRLLAEGVKPDELVGICVERSPEMIVAFLGVMKAGAAYVPLDPAHPQERIAYMIEDSQASVLLTQASLTDRLPASSRQVICLDSDELANEPVTNAETSVGEHNLAYVIYTSGSTGLPKGVMIEHRSVINLAYDLIRHFQIDATSRVLQFISFSFDVSVSEIVMSLLAGATLVIEDRESLLPGPELIRVLQEQRITTFAMVSSVLAALPEADLPDLRTIIVGGEAPSRELVARYATGRQFINCYGPTETTVTATLKHCQDDGKNPPIGRPIANTTVYVLDAHLQPVPIGVPGELYIGGKGVARGYWNRPELTAERFIADPFGQADERLYRTGDLVRYLENGELEFLGRIDDQVKIRGYRIELGEIENALRQHPAVQNVVVIARQEGAGDKRLAAYLVAATGQQPDEAELVRYLKSTLPEYMVPAGYVWLEKIPLTVNGKVDRRALPAPDYGHAETGKAYVAPRKPIEEIVANIWAQVLSVERVGVYDDFFELGGHSLLATQAVSRLKEAFGVNVPLRTLFEHPDVAGMSEKLAGLLEEQSGVTSIPLVPVPRDKQLPLSFAQQRLWFLDRLMPDSALYNIPSAVRIQGQLNIRAWERSLQTIIERHESLRTTFTDIGGEAVQVIHEMMEWRLVEIDLRDLPDEEREAAVQRLEKAEASQPFNLRTGPLLRATLIQTGEEDFVFLLNMHHIVSDGWSMSIFMGELATIYEALSKGDTPQLAEMPLQYADFAAWQRDWLQGEVLEQQLAYWREKLGAAEPMLALPTDRPRPAVQTHHGALYTTAFPLALTEKLHALSRQEGATLFMTLLAAFQTLLYRYSGQDDIIVGSPVAGRNKQETESMIGFFINTLAMRTDMSGAPTFRELLARVRDTALEAYTHQDLPFEKLIDELELERSLSYSPLFQVMFALQNFQMLTREFEGIEIVPFESKNEAVMSKYDISLTMAETQNGLVATFDYNTDLFDHSTIVRMVNHFHQLLEGIVARPDSSIQALPLLATDEREQLVSAWNNTAAAYTYEQTVHELVAAMAEKMPEQLAVVSAEGSLTYAQLDAKANQLANYLQQQGITPETLVGICVERSSEMIVGQLGILKAGGAFVPMDPAYPQERLAFMMADTGMPFVLTQERLLETLPAGDAAFICLDADWEVIAEESTQAPELAVTTDQLAYVIYTSGSTGTPKGVEIEHRALLNLIYWHQHAYTITPDDRASQIAGTAFDAAVWEIWPYMTAGATLYLPQEEIRLIPEKLRDWLVAEGITISFLPTPLAESMLSVDWPSHAALRYVLTGGDKLHHYPAEHVPFTLVNQYGPTENAVVATAGIVAVQAGQVTPPSIGRPIDNVQVYILDEQRQPVPIGVTGELYIAGSSLARGYYKRPDLTQERFVDNPFTANRGAKMYRTGDLVRYLPDGQIEFIGRSDDQVSIRGFRVELGEIESVLYQHPAVKEAIVLAREDMPGVKRLAAYVVVAEDDAEQADDLRGYLKEKLPEYMVPAAFVTLKALPLTPNGKVDRRALPVPEYTAADGEYVAPETFVEKVLAQIWKEVLGVEEVGIHDNFFELGGDSILSIQIVARAGQSGIRLSPKLLFENQTIAELSHAVGDSVHICAEQGLVTGEVPLLPIQHWFFEQKLADRNHWNQSVLLTVQPIDPEILKQAFYHLLGHHDALRLRFYHQNGAWKQAGAEWTDIIPFYVVELGDLPANQQVEQIEKLSGEAQASLHLADGPLLRAVYFDMGAGQEGRLLIVIHHLAVDGVSWRIITEDLNKACNQLLQGKQVQLPPKTSSYKYWAEKLVEYAASDSLTEEADYWLSRLDTEVAALPKDYEHGQNRELAARTVSVALTQEETKVLLQELPAVYQTQINDVLLTALAEAVFVWTGNQTTLVHLEGHGREDIFDDVDLSRTVGWFTSMYTILLDTRGTSSLTEALQTTKEQLRSIPHKGIGYGILRYLNKETAEKFKSLPKAQISFNYLGQLDQAVRDTDSLFGFASEARGDNFNRNSDRQHLLDFGCSVVGGQLVVSVAFSKEIYRKETIEALADYYITALRQLLAHAKTDKAAAPAQSAASNLSEFGWDDEEIADLLDLIQDK.

Carrier domains follow at residues 977–1052, 2042–2116, 3557–3632, 4621–4695, 6141–6216, and 7200–7274; these read EPRN…AALQ, APAT…ADSS, APRT…ASLL, APAT…TVTD, APRK…AGLL, and APET…GDSV. 6 positions are modified to O-(pantetheine 4'-phosphoryl)serine: Ser1012, Ser2077, Ser3592, Ser4656, Ser6176, and Ser7235.

This sequence belongs to the ATP-dependent AMP-binding enzyme family. As to quaternary structure, large multienzyme complex composed of 4 subunits; LgrA, LgrB, LgrC and LgrD. Pantetheine 4'-phosphate serves as cofactor.

Activates the 7th to 12th amino acids (Val, D-Val, Trp, D-Leu, Xaa and D-Leu) in linear gramicidin and catalyzes the formation of the peptide bond between them. This enzyme is also responsible for the epimerization of the 8th (D-Val), the 10th (D-Leu) and 12th (D-Leu) amino acids. The 11th (Xaa) amino acid is Trp in linear gramicidin A; Phe in linear gramicidin B and Tyr in linear gramicidin C. The chain is Linear gramicidin synthase subunit C (lgrC) from Brevibacillus parabrevis.